The chain runs to 88 residues: Sec-independent protein translocase protein TatA (88 aa).

Residues 1-21 (MGGIGIWQLAIITVIVILLFG) traverse the membrane as a helical segment. Residues 46–88 (DNDKDSTQVDDKDSTQVDDNAKQPSNKKVEENIKEQSKEKDRA) form a disordered region.

It belongs to the TatA/E family. As to quaternary structure, the Tat system comprises two distinct complexes: a TatABC complex, containing multiple copies of TatA, TatB and TatC subunits, and a separate TatA complex, containing only TatA subunits. Substrates initially bind to the TatABC complex, which probably triggers association of the separate TatA complex to form the active translocon.

The protein resides in the cell inner membrane. Part of the twin-arginine translocation (Tat) system that transports large folded proteins containing a characteristic twin-arginine motif in their signal peptide across membranes. TatA could form the protein-conducting channel of the Tat system. This is Sec-independent protein translocase protein TatA from Psychromonas ingrahamii (strain DSM 17664 / CCUG 51855 / 37).